The following is a 62-amino-acid chain: ATP synthase subunit epsilon, mitochondrial (62 aa).

At threonine 52 the chain carries Phosphothreonine.

The protein belongs to the eukaryotic ATPase epsilon family. As to quaternary structure, F-type ATPases have 2 components, CF(1) - the catalytic core - and CF(0) - the membrane proton channel. CF(1) has five subunits: alpha(3), beta(3), gamma(1), delta(1), epsilon(1). CF(0) has three main subunits: a, b and c.

The protein localises to the mitochondrion. It is found in the mitochondrion inner membrane. Mitochondrial membrane ATP synthase (F(1)F(0) ATP synthase or Complex V) produces ATP from ADP in the presence of a proton gradient across the membrane which is generated by electron transport complexes of the respiratory chain. F-type ATPases consist of two structural domains, F(1) - containing the extramembraneous catalytic core, and F(0) - containing the membrane proton channel, linked together by a central stalk and a peripheral stalk. During catalysis, ATP synthesis in the catalytic domain of F(1) is coupled via a rotary mechanism of the central stalk subunits to proton translocation. Part of the complex F(1) domain and of the central stalk which is part of the complex rotary element. Rotation of the central stalk against the surrounding alpha(3)beta(3) subunits leads to hydrolysis of ATP in three separate catalytic sites on the beta subunits. The polypeptide is ATP synthase subunit epsilon, mitochondrial (ATP15) (Saccharomyces cerevisiae (strain ATCC 204508 / S288c) (Baker's yeast)).